The primary structure comprises 166 residues: Regulatory protein RecX (166 aa).

Belongs to the RecX family.

The protein localises to the cytoplasm. Functionally, modulates RecA activity. The sequence is that of Regulatory protein RecX from Salmonella newport (strain SL254).